The sequence spans 674 residues: Leucine-rich repeat transmembrane protein FLRT1 (674 aa).

A signal peptide spans 1–51 (MVVAHSAATATTTPAATVTATVVMTTATMDLRDWLFLCYGLIAFLTEVIDS). Over 52-552 (TTCPSVCRCD…QNAGPMAGLP (501 aa)) the chain is Extracellular. Disulfide bonds link cysteine 54–cysteine 60 and cysteine 58–cysteine 67. The LRRNT domain occupies 54-80 (CPSVCRCDNGFIYCNDRGLTSIPSDIP). LRR repeat units follow at residues 81-105 (DDAT…LKTK), 106-126 (VKVQ…INLP), 127-149 (RSLR…SLAR), 151-175 (PLLE…AFAD), 176-197 (SKQL…SGLP), 198-220 (HTLE…AFKG), 222-246 (NSLR…TFSR), 247-269 (LQNL…NLPS), 270-292 (AHLQ…TLAK), and 293-316 (MREL…LFDD). N-linked (GlcNAc...) asparagine glycosylation occurs at asparagine 305. The LRRCT domain maps to 328 to 379 (NPWFCGCNLMWLRDWVRARAAVVNVRGLMCQGPEKVRGMAIKDITSEMDECF). A disulfide bridge links cysteine 332 with cysteine 357. Residues 437–532 (KTLVIQVKPL…VCAKAETADS (96 aa)) form the Fibronectin type-III domain. Residues 553–573 (LAGIIGGAVALVFLFLVLGAI) traverse the membrane as a helical segment. Residues 574-674 (CWYVHRAGEL…GIPDVDYSYT (101 aa)) lie on the Cytoplasmic side of the membrane. Tyrosine 600, tyrosine 633, and tyrosine 671 each carry phosphotyrosine.

Interacts with FGFR1. Interacts (via extracellular domain) with ADGRL1/LPHN1 and ADGRL3 (via olfactomedin-like domain). In terms of processing, phosphorylated in response to FGFR1 signaling, but is not a direct substrate of FGFR1 or SRC. A mutant where the Tyr phosphorylation sites have been replaced by Phe displays constitutive FGFR1-dependent activation of downstream MAP kinases. N-glycosylated. Post-translationally, proteolytic cleavage in the juxtamembrane region gives rise to a soluble ectodomain. Detected in brain (at protein level).

The protein localises to the cell membrane. It localises to the endoplasmic reticulum membrane. It is found in the cytoplasmic vesicle membrane. Its subcellular location is the cytoplasm. The protein resides in the perinuclear region. The protein localises to the cell junction. It localises to the focal adhesion. It is found in the secreted. Its subcellular location is the cell projection. The protein resides in the neuron projection. Plays a role in fibroblast growth factor-mediated signaling cascades that lead to the activation of MAP kinases. Promotes neurite outgrowth via FGFR1-mediated activation of downstream MAP kinases. Promotes an increase both in neurite number and in neurite length. May play a role in cell-cell adhesion and cell guidance via its interaction with ADGRL1/LPHN1 and ADGRL3. In Mus musculus (Mouse), this protein is Leucine-rich repeat transmembrane protein FLRT1.